The chain runs to 333 residues: Taste receptor type 2 member 123 (333 aa).

The Extracellular segment spans residues 1-14 (MFSQKTNYSHLFTF). A helical membrane pass occupies residues 15–37 (SIIFYVEIVTGILGNGFIALVNI). The Cytoplasmic portion of the chain corresponds to 38 to 57 (MDWLKRRRISTADQILTALA). A helical transmembrane segment spans residues 58–77 (LTRLIYVWSVLICILLLFLC). Over 78–91 (PHLSMRPEMFTAIG) the chain is Extracellular. A helical membrane pass occupies residues 92-114 (VIWVVDNHFSIWLATCLGVFYFL). At 115 to 133 (KIASFSNSLFLYLKWRVKK) the chain is on the cytoplasmic side. The helical transmembrane segment at 134–156 (VVLMIILISLIFLMLNISSLGMY) threads the bilayer. The Extracellular segment spans residues 157-204 (DHFSIDVYEGNMSYNLVDSTHFPRIFLFTNSSKVFLIANSSHVFLPIN). 3 N-linked (GlcNAc...) asparagine glycosylation sites follow: asparagine 167, asparagine 186, and asparagine 195. A helical transmembrane segment spans residues 205-227 (SLFMLIPFTVSLVAFFVLFLSLW). Residues 228–250 (KHHKKMQVNAKGPRDASTMAHTK) are Cytoplasmic-facing. The helical transmembrane segment at 251-273 (ALQIGFSFLLLYAIYLLFIITGI) threads the bilayer. Residues 274–282 (LNLDLMRCI) are Extracellular-facing. The helical transmembrane segment at 283 to 305 (VILLFDHISGAVFSISHSFVLIL) threads the bilayer. The Cytoplasmic segment spans residues 306–333 (GNSKLRQATLSVLPCLRCRSKDMDTVVF).

Belongs to the G-protein coupled receptor T2R family. As to expression, expressed in subsets of taste receptor cells of the tongue and palate epithelium and exclusively in gustducin-positive cells. Expressed in the antrum and fundus (part of the stomach), duodenum and in gastric endocrine cells.

Its subcellular location is the membrane. Its function is as follows. Gustducin-coupled receptor implicated in the perception of bitter compounds in the oral cavity and the gastrointestinal tract. Signals through PLCB2 and the calcium-regulated cation channel TRPM5. The polypeptide is Taste receptor type 2 member 123 (Tas2r123) (Rattus norvegicus (Rat)).